We begin with the raw amino-acid sequence, 1826 residues long: Protein TIC 214 (1826 aa).

A run of 5 helical transmembrane segments spans residues 18–38 (IINS…FSIG), 67–87 (FITG…HLAL), 127–147 (LSIQ…HFIL), 175–195 (VGWL…LVWI), and 221–241 (IFSI…PSPI). The disordered stretch occupies residues 250–308 (TEEGWESEEETDVEIETASETKGTKQEQEGSTEEDPSPSLFSEEKEDPDKIDETEEIRV). 2 stretches are compositionally biased toward acidic residues: residues 252 to 266 (EGWE…EIET) and 293 to 304 (EKEDPDKIDETE). Residues 774 to 794 (LILIIQSIFRKYILLPSLIIV) traverse the membrane as a helical segment. Residues 1032–1057 (TKGLMKEKNSNAKKRGSPNKTSFNRK) form a disordered region. Positions 1042–1057 (NAKKRGSPNKTSFNRK) are enriched in basic residues. The chain crosses the membrane as a helical span at residues 1081–1101 (FYLFITIFIKRIYIDIFVCII).

This sequence belongs to the TIC214 family. Part of the Tic complex.

The protein localises to the plastid. It is found in the chloroplast inner membrane. Functionally, involved in protein precursor import into chloroplasts. May be part of an intermediate translocation complex acting as a protein-conducting channel at the inner envelope. This Daucus carota (Wild carrot) protein is Protein TIC 214.